A 267-amino-acid polypeptide reads, in one-letter code: 4-hydroxy-tetrahydrodipicolinate reductase (267 aa).

10–15 (GCLGKQ) provides a ligand contact to NAD(+). Arg-37 contributes to the NADP(+) binding site. NAD(+) is bound by residues 99–101 (GTT) and 122–125 (TTNV). His-154 (proton donor/acceptor) is an active-site residue. Position 155 (His-155) interacts with (S)-2,3,4,5-tetrahydrodipicolinate. The active-site Proton donor is Lys-158. 164 to 165 (GT) lines the (S)-2,3,4,5-tetrahydrodipicolinate pocket.

The protein belongs to the DapB family.

It is found in the cytoplasm. The catalysed reaction is (S)-2,3,4,5-tetrahydrodipicolinate + NAD(+) + H2O = (2S,4S)-4-hydroxy-2,3,4,5-tetrahydrodipicolinate + NADH + H(+). It catalyses the reaction (S)-2,3,4,5-tetrahydrodipicolinate + NADP(+) + H2O = (2S,4S)-4-hydroxy-2,3,4,5-tetrahydrodipicolinate + NADPH + H(+). It participates in amino-acid biosynthesis; L-lysine biosynthesis via DAP pathway; (S)-tetrahydrodipicolinate from L-aspartate: step 4/4. Its function is as follows. Catalyzes the conversion of 4-hydroxy-tetrahydrodipicolinate (HTPA) to tetrahydrodipicolinate. The sequence is that of 4-hydroxy-tetrahydrodipicolinate reductase from Ehrlichia canis (strain Jake).